Reading from the N-terminus, the 248-residue chain is uncharacterized protein (248 aa).

An NADP(+)-binding site is contributed by isoleucine 8–valine 32. Substrate is bound at residue serine 143. Catalysis depends on tyrosine 153, which acts as the Proton acceptor.

This sequence belongs to the short-chain dehydrogenases/reductases (SDR) family.

This is an uncharacterized protein from Mycobacterium tuberculosis (strain CDC 1551 / Oshkosh).